The sequence spans 83 residues: Translational regulator CsrA (83 aa).

The protein belongs to the CsrA/RsmA family. In terms of assembly, homodimer; the beta-strands of each monomer intercalate to form a hydrophobic core, while the alpha-helices form wings that extend away from the core.

It is found in the cytoplasm. Its function is as follows. A translational regulator that binds mRNA to regulate translation initiation and/or mRNA stability. Usually binds in the 5'-UTR at or near the Shine-Dalgarno sequence preventing ribosome-binding, thus repressing translation. Its main target seems to be the major flagellin gene, while its function is anatagonized by FliW. The sequence is that of Translational regulator CsrA from Thermotoga petrophila (strain ATCC BAA-488 / DSM 13995 / JCM 10881 / RKU-1).